Reading from the N-terminus, the 135-residue chain is Fluoride-specific ion channel FluC (135 aa).

Helical transmembrane passes span 12–32, 42–62, 70–90, and 106–126; these read FLVI…LGLS, LGTL…VGIF, LAWK…FSTF, and AIGL…LGLL. Na(+)-binding residues include Gly-82 and Thr-85.

It belongs to the fluoride channel Fluc/FEX (TC 1.A.43) family.

It localises to the cell inner membrane. The catalysed reaction is fluoride(in) = fluoride(out). Its activity is regulated as follows. Na(+) is not transported, but it plays an essential structural role and its presence is essential for fluoride channel function. In terms of biological role, fluoride-specific ion channel. Important for reducing fluoride concentration in the cell, thus reducing its toxicity. The polypeptide is Fluoride-specific ion channel FluC (Dechloromonas aromatica (strain RCB)).